The following is a 293-amino-acid chain: uncharacterized protein (293 aa).

Disordered regions lie at residues 20–148 and 226–283; these read ELHS…NNNT and RENQ…GNKN. Composition is skewed to acidic residues over residues 37–47, 56–91, and 99–112; these read LEDDEEYDDDQ, EEFD…DDEM, and NIDD…EEEQ. Composition is skewed to low complexity over residues 117-148 and 232-283; these read TNNN…NNNT and NSNS…GNKN.

This is an uncharacterized protein from Dictyostelium discoideum (Social amoeba).